Consider the following 84-residue polypeptide: Small ribosomal subunit protein uS17 (84 aa).

It belongs to the universal ribosomal protein uS17 family. As to quaternary structure, part of the 30S ribosomal subunit.

One of the primary rRNA binding proteins, it binds specifically to the 5'-end of 16S ribosomal RNA. The sequence is that of Small ribosomal subunit protein uS17 from Glaesserella parasuis serovar 5 (strain SH0165) (Haemophilus parasuis).